The primary structure comprises 273 residues: Putative tyrosine-protein phosphatase H16_A0669 (273 aa).

The first 15 residues, 1-15, serve as a signal peptide directing secretion; that stretch reads MIKWLQRAGCLSAHA. The active-site Phosphocysteine intermediate is the C169.

The protein belongs to the protein-tyrosine phosphatase family.

It catalyses the reaction O-phospho-L-tyrosyl-[protein] + H2O = L-tyrosyl-[protein] + phosphate. This is Putative tyrosine-protein phosphatase H16_A0669 from Cupriavidus necator (strain ATCC 17699 / DSM 428 / KCTC 22496 / NCIMB 10442 / H16 / Stanier 337) (Ralstonia eutropha).